The primary structure comprises 78 residues: Gas vesicle protein G (78 aa).

It belongs to the gas vesicle GvpG family.

Its subcellular location is the gas vesicle. In terms of biological role, might be a minor component of the gas vesicle involved in nucleating their formation. Gas vesicles are hollow, gas filled proteinaceous nanostructures found in some microorganisms. It is not clear what function gas vesicles perform in soil bacteria. The protein is Gas vesicle protein G of Streptomyces sp. (strain CB03234).